Reading from the N-terminus, the 740-residue chain is Polyribonucleotide nucleotidyltransferase (740 aa).

Mg(2+)-binding residues include Asp-496 and Asp-502. The KH domain maps to 563–622 (PAIIRTSIHPDKIRDIIGPGGKIIKKLVEETGADIDIEDDGRVFIAAVDREKGKRALEII). The S1 motif domain maps to 632-706 (GKLYNGKVTR…QQGRLKLSKK (75 aa)). The disordered stretch occupies residues 707–740 (EAMRDMGLAPAESTSEQPEKRERRPFSRPKATKE). Over residues 723-740 (QPEKRERRPFSRPKATKE) the composition is skewed to basic and acidic residues.

It belongs to the polyribonucleotide nucleotidyltransferase family. Requires Mg(2+) as cofactor.

The protein localises to the cytoplasm. The catalysed reaction is RNA(n+1) + phosphate = RNA(n) + a ribonucleoside 5'-diphosphate. Functionally, involved in mRNA degradation. Catalyzes the phosphorolysis of single-stranded polyribonucleotides processively in the 3'- to 5'-direction. This Desulforamulus reducens (strain ATCC BAA-1160 / DSM 100696 / MI-1) (Desulfotomaculum reducens) protein is Polyribonucleotide nucleotidyltransferase.